We begin with the raw amino-acid sequence, 159 residues long: L-alanine exporter AlaE (159 aa).

4 helical membrane passes run 17–37, 48–68, 86–106, and 110–130; these read FAMVIFSFITGMMIEVFVSGM, LSIPVNIAIAWPYGVFRDYLL, MVAYVLFQSPVYACILLAVGA, and QIITAVTSNAFVSGALGIVYG.

The protein belongs to the AlaE exporter family.

It localises to the cell inner membrane. Exports L-alanine. This Photobacterium profundum (strain SS9) protein is L-alanine exporter AlaE.